The following is a 237-amino-acid chain: uncharacterized protein (237 aa).

Positions 213–237 (GQGKYLKLDSNTTENKTTKQNETGG) are disordered. Low complexity predominate over residues 223–237 (NTTENKTTKQNETGG).

This is an uncharacterized protein from Methanothermobacter thermautotrophicus (Methanobacterium thermoformicicum).